Here is a 446-residue protein sequence, read N- to C-terminus: ATP-dependent protease ATPase subunit HslU (446 aa).

ATP is bound by residues I17, 59–64 (GVGKTE), D255, E320, and R392.

Belongs to the ClpX chaperone family. HslU subfamily. As to quaternary structure, a double ring-shaped homohexamer of HslV is capped on each side by a ring-shaped HslU homohexamer. The assembly of the HslU/HslV complex is dependent on binding of ATP.

It is found in the cytoplasm. Functionally, ATPase subunit of a proteasome-like degradation complex; this subunit has chaperone activity. The binding of ATP and its subsequent hydrolysis by HslU are essential for unfolding of protein substrates subsequently hydrolyzed by HslV. HslU recognizes the N-terminal part of its protein substrates and unfolds these before they are guided to HslV for hydrolysis. The sequence is that of ATP-dependent protease ATPase subunit HslU from Pseudomonas fluorescens (strain ATCC BAA-477 / NRRL B-23932 / Pf-5).